A 1133-amino-acid chain; its full sequence is Envelopment polyprotein (1133 aa).

The first 17 residues, 1–17 (MWSLLLLAALVGQGFAL), serve as a signal peptide directing secretion. Residues 18–484 (KNVFDMRIQC…PGFHGWATAA (467 aa)) lie on the Lumenal side of the membrane. 11 disulfides stabilise this stretch: C27/C149, C61/C155, C107/C126, C131/C136, C173/C183, C208/C245, C232/C349, C374/C433, C378/C387, C403/C422, and C450/C473. An N-linked (GlcNAc...) asparagine; by host glycan is attached at N132. 2 N-linked (GlcNAc...) asparagine; by host glycosylation sites follow: N233 and N345. An N-linked (GlcNAc...) asparagine; by host glycan is attached at N397. A helical transmembrane segment spans residues 485 to 504 (LLITFCFGWVLIPACTLAIL). Residues 505–626 (LVLKFFANIL…NLFRYKSRCY (122 aa)) are Cytoplasmic-facing. Positions 514–531 (LHTSNQENRFKAILRKIK) are binding to the ribonucleoprotein. 2 CCHC-type zinc fingers span residues 543–563 (CEIC…NLSC) and 568–589 (CPYC…YKVC). 3 binding to the ribonucleoprotein regions span residues 586-603 (YKVC…KKTV), 590-601 (QATHRFREDLKK), and 609-623 (GPGC…RYKS). The 24-residue stretch at 609–632 (GPGCYRTLNLFRYKSRCYILTMWT) folds into the ITAM domain. A YxxL motif is present at residues 613–616 (YRTL). A helical transmembrane segment spans residues 627–647 (ILTMWTLLLIIESILWAASAA). Over 648 to 1104 (EIPLVPLWTD…WVMGIINGNW (457 aa)) the chain is Lumenal. Disulfide bonds link C733-C768, C737-C775, C749-C883, C763-C894, C778-C902, C804-C813, C821-C830, and C861-C865. The segment at 755-775 (YEYENSWACNPPDCPGVGTGC) is fusion loop. Residue N926 is glycosylated (N-linked (GlcNAc...) asparagine; by host). Intrachain disulfides connect C968–C998, C991–C1043, C1008–C1013, C1044–C1049, and C1083–C1087. Residues 1105–1125 (VVLIVLCVLLLFSLILLSILC) traverse the membrane as a helical segment. Positions 1120-1133 (LLSILCPVRKHKKS) are binding to the ribonucleoprotein. The Cytoplasmic portion of the chain corresponds to 1126–1133 (PVRKHKKS).

The protein belongs to the hantavirus envelope glycoprotein family. In terms of assembly, homodimer. Homotetramer; forms heterotetrameric Gn-Gc spikes in the pre-fusion conformation. Interacts (via C-terminus) with the nucleoprotein. Interacts with host TUFM; this interaction contributes to the virus-induced degradation of mitochondria by autophagy, which leads to degradation of host MAVS and inhibition of type I interferon (IFN) responses. Interacts with host MAP1LC3B; this interaction contributes to the virus-induced degradation of mitochondria by autophagy, which leads to degradation of host MAVS and inhibition of type I interferon (IFN) responses. As to quaternary structure, homodimer. Homotetramer; forms heterotetrameric Gn-Gc spikes in the pre-fusion conformation. Homotrimer; forms homotrimer in the post-fusion conformation at acidic pH. Interacts (via C-terminus) with the nucleoprotein. In terms of processing, envelope polyprotein precursor is quickly cleaved in vivo just after synthesis, presumably by host signal peptidase.

The protein localises to the virion membrane. It is found in the host cell surface. It localises to the host Golgi apparatus membrane. The protein resides in the host endoplasmic reticulum membrane. Its subcellular location is the host mitochondrion. In terms of biological role, forms homotetramers with glycoprotein C at the surface of the virion. Attaches the virion to host cell receptors including integrin ITGAV/ITGB3. This attachment induces virion internalization predominantly through clathrin-dependent endocytosis. Mediates the assembly and budding of infectious virus particles through its interaction with the nucleocapsid protein and the viral genome. May dysregulate normal immune and endothelial cell responses through an ITAM motif. Translocates to mitochondria, binds to host TUFM and recruits MAP1LC3B. These interactions induce mitochondrial autophagy and therefore destruction of host MAVS leading to inhibition of type I interferon (IFN) responses. Concomitant breakdown of glycoprotein N is apparently prevented by the nucleoprotein that may inhibit Gn-stimulated autophagosome-lysosome fusion. Interacts with the viral genomic RNA. Forms homotetramers with glycoprotein N at the surface of the virion. Attaches the virion to host cell receptors including integrin ITGAV/ITGB3. This attachment induces virion internalization predominantly through clathrin-dependent endocytosis. Class II fusion protein that promotes fusion of viral membrane with host endosomal membrane after endocytosis of the virion. The protein is Envelopment polyprotein (GP) of Homo sapiens (Human).